Here is a 165-residue protein sequence, read N- to C-terminus: SsrA-binding protein (165 aa).

The segment at Lys-141–Tyr-165 is disordered. The span at Lys-145–Lys-159 shows a compositional bias: basic and acidic residues.

This sequence belongs to the SmpB family.

Its subcellular location is the cytoplasm. In terms of biological role, required for rescue of stalled ribosomes mediated by trans-translation. Binds to transfer-messenger RNA (tmRNA), required for stable association of tmRNA with ribosomes. tmRNA and SmpB together mimic tRNA shape, replacing the anticodon stem-loop with SmpB. tmRNA is encoded by the ssrA gene; the 2 termini fold to resemble tRNA(Ala) and it encodes a 'tag peptide', a short internal open reading frame. During trans-translation Ala-aminoacylated tmRNA acts like a tRNA, entering the A-site of stalled ribosomes, displacing the stalled mRNA. The ribosome then switches to translate the ORF on the tmRNA; the nascent peptide is terminated with the 'tag peptide' encoded by the tmRNA and targeted for degradation. The ribosome is freed to recommence translation, which seems to be the essential function of trans-translation. This chain is SsrA-binding protein, found in Prochlorococcus marinus (strain MIT 9313).